A 67-amino-acid chain; its full sequence is Protein SlyX homolog (67 aa).

Belongs to the SlyX family.

This chain is Protein SlyX homolog, found in Thiobacillus denitrificans (strain ATCC 25259 / T1).